We begin with the raw amino-acid sequence, 210 residues long: Cancer/testis antigen 2 (210 aa).

Composition is skewed to gly residues over residues 1–47 and 56–66; these read MQAE…GPRG and PRGGAPRGPHG. Disordered stretches follow at residues 1 to 80 and 154 to 197; these read MQAE…PCGA and GLGS…DGCR. Over residues 163–177 the composition is skewed to basic and acidic residues; sequence QKARDLRTPKHKVSE.

Belongs to the CTAG/PCC1 family. As to expression, testis and very low level in placenta and in some uterus samples. Observed in 25-50% of tumor samples of melanomas, non-small-cell lung carcinomas, bladder, prostate and head and neck cancers.

The sequence is that of Cancer/testis antigen 2 (CTAG2) from Homo sapiens (Human).